Here is a 548-residue protein sequence, read N- to C-terminus: Chaperonin GroEL (548 aa).

ATP-binding positions include 30–33, lysine 51, 87–91, glycine 415, and aspartate 496; these read TLGP and DGTTT.

The protein belongs to the chaperonin (HSP60) family. In terms of assembly, forms a cylinder of 14 subunits composed of two heptameric rings stacked back-to-back. Interacts with the co-chaperonin GroES.

The protein localises to the cytoplasm. It carries out the reaction ATP + H2O + a folded polypeptide = ADP + phosphate + an unfolded polypeptide.. Functionally, together with its co-chaperonin GroES, plays an essential role in assisting protein folding. The GroEL-GroES system forms a nano-cage that allows encapsulation of the non-native substrate proteins and provides a physical environment optimized to promote and accelerate protein folding. This chain is Chaperonin GroEL, found in Haemophilus influenzae (strain PittGG).